Consider the following 328-residue polypeptide: L-lactate dehydrogenase (328 aa).

NAD(+) is bound by residues Val18, Glu39, Lys46, Tyr71, and 85–86 (GA). Positions 88 and 94 each coordinate substrate. NAD(+)-binding positions include Ser107, 124–126 (AAN), and Ser149. 126 to 129 (NPVD) contacts substrate. 154-157 (DSAR) contacts substrate. 2 residues coordinate beta-D-fructose 1,6-bisphosphate: Arg159 and His174. His181 functions as the Proton acceptor in the catalytic mechanism. Tyr226 is subject to Phosphotyrosine. Thr235 contributes to the substrate binding site.

It belongs to the LDH/MDH superfamily. LDH family. In terms of assembly, homotetramer.

Its subcellular location is the cytoplasm. It catalyses the reaction (S)-lactate + NAD(+) = pyruvate + NADH + H(+). The protein operates within fermentation; pyruvate fermentation to lactate; (S)-lactate from pyruvate: step 1/1. With respect to regulation, allosterically activated by fructose 1,6-bisphosphate (FBP). Functionally, catalyzes the conversion of lactate to pyruvate. The polypeptide is L-lactate dehydrogenase (Streptococcus gordonii (strain Challis / ATCC 35105 / BCRC 15272 / CH1 / DL1 / V288)).